Here is a 325-residue protein sequence, read N- to C-terminus: Casein kinase I isoform alpha (325 aa).

A2 carries the N-acetylalanine modification. Position 4 is a phosphoserine (S4). K8 carries the N6-acetyllysine modification. One can recognise a Protein kinase domain in the interval 17–285; sequence YKLVRKIGSG…YLRQLFRILF (269 aa). ATP-binding positions include 23–31 and K46; that span reads IGSGSFGDI. The active-site Proton acceptor is D136.

The protein belongs to the protein kinase superfamily. CK1 Ser/Thr protein kinase family. Casein kinase I subfamily. Interacts with the Axin complex. Interacts with TUT1, leading to TUT1 phosphorylation. Interacts with FAM83A, FAM83B, FAM83C, FAM83D, FAM83E, FAM83F, FAM83G and FAM83H (via DUF1669). Interaction with FAM83H recruits CSNK1A1 to keratin filaments. Phosphorylated by MTOR in response to mitogenic stimulation, leading to its activation.

It localises to the cytoplasm. Its subcellular location is the cytoskeleton. It is found in the microtubule organizing center. The protein resides in the centrosome. The protein localises to the chromosome. It localises to the centromere. Its subcellular location is the kinetochore. It is found in the nucleus speckle. The protein resides in the cilium basal body. The protein localises to the spindle. It carries out the reaction L-seryl-[protein] + ATP = O-phospho-L-seryl-[protein] + ADP + H(+). It catalyses the reaction L-threonyl-[protein] + ATP = O-phospho-L-threonyl-[protein] + ADP + H(+). Its function is as follows. Casein kinases are operationally defined by their preferential utilization of acidic proteins such as caseins as substrates. Can phosphorylate a large number of proteins. Participates in Wnt signaling. Phosphorylates CTNNB1 at 'Ser-45'. May phosphorylate PER1 and PER2. May play a role in segregating chromosomes during mitosis. May play a role in keratin cytoskeleton disassembly and thereby, it may regulate epithelial cell migration. Acts as a positive regulator of mTORC1 and mTORC2 signaling in response to nutrients by mediating phosphorylation of DEPTOR inhibitor. Acts as an inhibitor of NLRP3 inflammasome assembly by mediating phosphorylation of NLRP3. The protein is Casein kinase I isoform alpha (CSNK1A1) of Oryctolagus cuniculus (Rabbit).